Here is a 133-residue protein sequence, read N- to C-terminus: Small ribosomal subunit protein bS6 (133 aa).

The span at 106 to 125 shows a compositional bias: basic and acidic residues; that stretch reads REERVERAPRAPRPEVKAEP. The disordered stretch occupies residues 106 to 133; sequence REERVERAPRAPRPEVKAEPEAEATAEA.

Belongs to the bacterial ribosomal protein bS6 family.

Its function is as follows. Binds together with bS18 to 16S ribosomal RNA. The sequence is that of Small ribosomal subunit protein bS6 from Psychromonas ingrahamii (strain DSM 17664 / CCUG 51855 / 37).